The sequence spans 366 residues: uncharacterized protein (366 aa).

This is an uncharacterized protein from Methanocaldococcus jannaschii (strain ATCC 43067 / DSM 2661 / JAL-1 / JCM 10045 / NBRC 100440) (Methanococcus jannaschii).